A 150-amino-acid polypeptide reads, in one-letter code: Putative pre-16S rRNA nuclease (150 aa).

This sequence belongs to the YqgF nuclease family.

It localises to the cytoplasm. Functionally, could be a nuclease involved in processing of the 5'-end of pre-16S rRNA. This is Putative pre-16S rRNA nuclease from Syntrophus aciditrophicus (strain SB).